Reading from the N-terminus, the 2167-residue chain is Myosin-VIIa (2167 aa).

Residues 63-733 (QGVEDMISLG…HDLFLEQERD (671 aa)) enclose the Myosin motor domain. 156–163 (GESGAGKT) is a binding site for ATP. Actin-binding stretches follow at residues 612–634 (LDALMKTLSSCQPFFIRCIKPNE) and 712–726 (QLGHTKVFLKDAHDL). 4 consecutive IQ domains span residues 736–758 (LTRKILILQRSIRGWVYRRRFLR), 759–788 (LRAAAITVQRFWKGYAQRKRYRNMRVGYMR), 805–827 (LRGHIVGLQAHARGYLVRREYGH), and 828–857 (KMWAVIKIQSHVRRMIAMRRYRKLRLEHKQ). Residues 886–919 (QHYRDRLHELERREIQEQLENRRRVEVNMNIIND) adopt a coiled-coil conformation. In terms of domain architecture, MyTH4 1 spans 1008-1245 (YAKKALKHPL…PSWLELQATK (238 aa)). In terms of domain architecture, FERM 1 spans 1250 to 1560 (IMLPITFMDG…YFLDGLKKRS (311 aa)). The SH3 domain maps to 1558–1627 (KRSKYVIALQ…PAETVYVLPT (70 aa)). 2 positions are modified to phosphoserine: Ser1651 and Ser1654. Residues 1701 to 1849 (YSRDPIKAPL…PHQVEVEAIQ (149 aa)) form the MyTH4 2 domain. In terms of domain architecture, FERM 2 spans 1855 to 2158 (IFHKVYFPDD…SYISLMLTNM (304 aa)). At Thr2045 the chain carries Phosphothreonine.

The protein belongs to the TRAFAC class myosin-kinesin ATPase superfamily. Myosin family. In terms of assembly, homodimerizes in a two headed molecule through the formation of a coiled-coil rod. Homodimers motility is approximately 8-10 times slower than that of myosin V, and its step size is 30 nm, which is consistent with the presence of five IQ motifs in its neck region. Interacts with Cad99C (via the cytoplasmic domain). Interacts with zip and Sans. In terms of tissue distribution, expressed in the setae, micro- and macrochaetae on the head, thorax and wing.

It localises to the cytoplasm. It is found in the cell cortex. The protein resides in the cell projection. The protein localises to the microvillus. In terms of biological role, myosins are actin-based motor molecules with ATPase activity. Unconventional myosins serve in intracellular movements: can function in cells as a single-molecule cargo transporter. A very slow and high-duty-ratio motor, may be suitable for tension maintenance of actin filaments. Their highly divergent tails are presumed to bind to membranous compartments, which would be moved relative to actin filaments. Plays a key role in the formation of cellular projections and other actin-based functions required for embryonic and larval viability. Necessary for auditory transduction: plays a role in Johnston's organ organization by functioning in scolopidial apical attachment and therefore to acoustic stimulus propagation from the antenna a2/a3 joint to transducing elements. Interaction with the myosin zip may be important for its function in scolopidial apical attachment. During oogenesis it has Cad99c-dependent and Cad99c-independent roles in regulating the shape and spacing of the follicle cell microvilli which secrete eggshell material such as the vitelline membrane. May be required for the normal expression of Cad99c in the follicle cell microvilli. The chain is Myosin-VIIa from Drosophila melanogaster (Fruit fly).